The primary structure comprises 339 residues: RNA 3'-terminal phosphate cyclase (339 aa).

ATP-binding positions include Gln101 and 283 to 286; that span reads HMSD. The Tele-AMP-histidine intermediate role is filled by His307.

Belongs to the RNA 3'-terminal cyclase family. Type 1 subfamily.

Its subcellular location is the cytoplasm. The enzyme catalyses a 3'-end 3'-phospho-ribonucleotide-RNA + ATP = a 3'-end 2',3'-cyclophospho-ribonucleotide-RNA + AMP + diphosphate. Functionally, catalyzes the conversion of 3'-phosphate to a 2',3'-cyclic phosphodiester at the end of RNA. The mechanism of action of the enzyme occurs in 3 steps: (A) adenylation of the enzyme by ATP; (B) transfer of adenylate to an RNA-N3'P to produce RNA-N3'PP5'A; (C) and attack of the adjacent 2'-hydroxyl on the 3'-phosphorus in the diester linkage to produce the cyclic end product. The biological role of this enzyme is unknown but it is likely to function in some aspects of cellular RNA processing. This Sulfurisphaera tokodaii (strain DSM 16993 / JCM 10545 / NBRC 100140 / 7) (Sulfolobus tokodaii) protein is RNA 3'-terminal phosphate cyclase.